A 361-amino-acid chain; its full sequence is Ribosomal RNA large subunit methyltransferase M (361 aa).

S-adenosyl-L-methionine contacts are provided by residues serine 187, 220 to 223 (CPGG), aspartate 239, aspartate 259, and aspartate 276. The active-site Proton acceptor is lysine 305.

It belongs to the class I-like SAM-binding methyltransferase superfamily. RNA methyltransferase RlmE family. RlmM subfamily. Monomer.

It localises to the cytoplasm. It catalyses the reaction cytidine(2498) in 23S rRNA + S-adenosyl-L-methionine = 2'-O-methylcytidine(2498) in 23S rRNA + S-adenosyl-L-homocysteine + H(+). Catalyzes the 2'-O-methylation at nucleotide C2498 in 23S rRNA. The sequence is that of Ribosomal RNA large subunit methyltransferase M from Shewanella sp. (strain ANA-3).